We begin with the raw amino-acid sequence, 472 residues long: Ammonium transporter Rh type C (472 aa).

Residues 1 to 9 (MAWNTNLRW) lie on the Cytoplasmic side of the membrane. The chain crosses the membrane as a helical span at residues 10–30 (RLPLTCLLLEVVMVILFGVFV). Residues 31-51 (RYDFDADAHWWSWRTEFYYRY) are Extracellular-facing. A helical transmembrane segment spans residues 52–72 (PSFQDVHVMVFVGFGFLMTFL). Over 73–76 (QRYG) the chain is Cytoplasmic. The helical transmembrane segment at 77–97 (FSAVGFNFLLAAFGIQWALLM) threads the bilayer. The Extracellular segment spans residues 98 to 114 (QGWFHFLQGRYIVVGVE). The chain crosses the membrane as a helical span at residues 115–135 (NLINADFCVASVCVAFGAVLG). The Cytoplasmic segment spans residues 136-139 (KVSP). The chain crosses the membrane as a helical span at residues 140 to 160 (IQLLIMTFFQVTLFAVNEFIL). The Extracellular segment spans residues 161–168 (LNLLKVKD). The chain crosses the membrane as a helical span at residues 169 to 191 (AGGSMTIHTFGAYFGLTVTRILY). Over 192-209 (RRNLEQSKERQNSVYQSD) the chain is Cytoplasmic. A helical membrane pass occupies residues 210 to 230 (LFAMIGTLFLWMYWPSFNSAI). Residues 231–241 (SYHGDSQHRAA) are Extracellular-facing. A helical transmembrane segment spans residues 242-262 (INTYCSLAACVLTSVAISSAL). Over 263-294 (HKKGKLDMVHIQNATPAGGVAVGTAAEMMLMP) the chain is Cytoplasmic. The chain crosses the membrane as a helical span at residues 295-315 (YGALIVGFVCGIISTLGFVYL). The Extracellular portion of the chain corresponds to 316 to 336 (TPFLESRLHIQDTCGINNLHG). A helical membrane pass occupies residues 337-357 (IPGIIGGIVGAVTAASASLEV). At 358 to 388 (YGKEGLVHSFDFQGFKRDWTARTQGKFQIYG) the chain is on the cytoplasmic side. The chain crosses the membrane as a helical span at residues 389 to 409 (LLVTLAMALMGGIIVGVGLIL). The Extracellular segment spans residues 410-450 (RLPFWGQPSDENCFEDAVYWEMPEGNSTVYIPEDPTFKPSG). N-linked (GlcNAc...) asparagine glycosylation is present at asparagine 435. Residues 451–471 (PSVPSVPMVSPLPMASSVPLV) traverse the membrane as a helical segment. Residue proline 472 is a topological domain, cytoplasmic.

Belongs to the ammonium transporter (TC 2.A.49) family. Rh subfamily. As to quaternary structure, homotrimer. Post-translationally, N-glycosylated.

The protein resides in the cell membrane. It is found in the apical cell membrane. The catalysed reaction is NH4(+)(in) = NH4(+)(out). It catalyses the reaction methylamine(out) = methylamine(in). The enzyme catalyses CO2(out) = CO2(in). In terms of biological role, ammonium transporter involved in the maintenance of acid-base homeostasis. Transports ammonium and its related derivative methylammonium across the plasma membrane of epithelial cells likely contributing to renal transepithelial ammonia transport and ammonia metabolism. Postulated to primarily mediate an electroneutral bidirectional transport of NH3 ammonia species according to a mechanism that implies interaction of an NH4(+) ion with acidic residues of the pore entry followed by dissociation of NH4(+) into NH3 and H(+). As a result NH3 transits through the central pore and is protonated on the extracellular side reforming NH4(+). May act as a CO2 channel providing for renal acid secretion. This chain is Ammonium transporter Rh type C (RHCG), found in Pongo abelii (Sumatran orangutan).